A 74-amino-acid chain; its full sequence is Large ribosomal subunit protein bL31 (74 aa).

The protein belongs to the bacterial ribosomal protein bL31 family. Type A subfamily. As to quaternary structure, part of the 50S ribosomal subunit.

Functionally, binds the 23S rRNA. In Chlorobaculum parvum (strain DSM 263 / NCIMB 8327) (Chlorobium vibrioforme subsp. thiosulfatophilum), this protein is Large ribosomal subunit protein bL31.